Here is a 682-residue protein sequence, read N- to C-terminus: DNA-directed RNA polymerase subunit beta' (682 aa).

Cys-69, Cys-71, Cys-87, and Cys-90 together coordinate Zn(2+). Mg(2+)-binding residues include Asp-489, Asp-491, and Asp-493.

The protein belongs to the RNA polymerase beta' chain family. RpoC1 subfamily. In plastids the minimal PEP RNA polymerase catalytic core is composed of four subunits: alpha, beta, beta', and beta''. When a (nuclear-encoded) sigma factor is associated with the core the holoenzyme is formed, which can initiate transcription. The cofactor is Mg(2+). Requires Zn(2+) as cofactor.

It localises to the plastid. Its subcellular location is the chloroplast. It carries out the reaction RNA(n) + a ribonucleoside 5'-triphosphate = RNA(n+1) + diphosphate. Its function is as follows. DNA-dependent RNA polymerase catalyzes the transcription of DNA into RNA using the four ribonucleoside triphosphates as substrates. The sequence is that of DNA-directed RNA polymerase subunit beta' from Acorus calamus var. americanus (American sweet flag).